The primary structure comprises 257 residues: Beta-fibrinogenase mucrofibrase-4 (257 aa).

The signal sequence occupies residues Met-1–Ala-18. Positions Gln-19–Leu-24 are excised as a propeptide. Residues Val-25 to Ala-248 enclose the Peptidase S1 domain. 6 disulfides stabilise this stretch: Cys-31–Cys-162, Cys-49–Cys-65, Cys-97–Cys-255, Cys-141–Cys-209, Cys-173–Cys-188, and Cys-199–Cys-224. Active-site charge relay system residues include His-64 and Asp-109. Catalysis depends on Ser-203, which acts as the Charge relay system.

It belongs to the peptidase S1 family. Snake venom subfamily. Monomer. In terms of tissue distribution, expressed by the venom gland.

The protein resides in the secreted. In terms of biological role, snake venom serine protease with fibrinogenolytic activities. Cleaves beta-chain of fibrinogen (FGB) efficiently and shows relatively lower activity on alpha-chain. The chain is Beta-fibrinogenase mucrofibrase-4 from Protobothrops mucrosquamatus (Taiwan habu).